Consider the following 499-residue polypeptide: Glycerol kinase (499 aa).

An ADP-binding site is contributed by threonine 12. ATP contacts are provided by threonine 12, threonine 13, and serine 14. Sn-glycerol 3-phosphate is bound at residue threonine 12. Arginine 16 contributes to the ADP binding site. The sn-glycerol 3-phosphate site is built by arginine 82, glutamate 83, tyrosine 134, and aspartate 243. Glycerol-binding residues include arginine 82, glutamate 83, tyrosine 134, aspartate 243, and glutamine 244. Residues threonine 265 and glycine 308 each contribute to the ADP site. 4 residues coordinate ATP: threonine 265, glycine 308, glutamine 312, and glycine 411. Glycine 411 contacts ADP.

The protein belongs to the FGGY kinase family.

It carries out the reaction glycerol + ATP = sn-glycerol 3-phosphate + ADP + H(+). It participates in polyol metabolism; glycerol degradation via glycerol kinase pathway; sn-glycerol 3-phosphate from glycerol: step 1/1. Its activity is regulated as follows. Inhibited by fructose 1,6-bisphosphate (FBP). Functionally, key enzyme in the regulation of glycerol uptake and metabolism. Catalyzes the phosphorylation of glycerol to yield sn-glycerol 3-phosphate. The protein is Glycerol kinase of Agrobacterium fabrum (strain C58 / ATCC 33970) (Agrobacterium tumefaciens (strain C58)).